The primary structure comprises 188 residues: Putative glutamine amidotransferase-like protein YvdE homolog (188 aa).

One can recognise a Glutamine amidotransferase type-1 domain in the interval 17-188; the sequence is SPFWWNKVSY…IKDLGQGLQA (172 aa).

The chain is Putative glutamine amidotransferase-like protein YvdE homolog from Lactococcus lactis subsp. cremoris (Streptococcus cremoris).